The primary structure comprises 100 residues: NADH-quinone oxidoreductase subunit K (100 aa).

3 helical membrane passes run 4-24, 28-48, and 60-80; these read LQHGLILAAILFALGLTGLLI, LLFMLISLEIMINAAALAFVV, and VMYILAISLAAAEASIGLALL.

Belongs to the complex I subunit 4L family. As to quaternary structure, NDH-1 is composed of 13 different subunits. Subunits NuoA, H, J, K, L, M, N constitute the membrane sector of the complex.

Its subcellular location is the cell inner membrane. It catalyses the reaction a quinone + NADH + 5 H(+)(in) = a quinol + NAD(+) + 4 H(+)(out). Its function is as follows. NDH-1 shuttles electrons from NADH, via FMN and iron-sulfur (Fe-S) centers, to quinones in the respiratory chain. The immediate electron acceptor for the enzyme in this species is believed to be ubiquinone. Couples the redox reaction to proton translocation (for every two electrons transferred, four hydrogen ions are translocated across the cytoplasmic membrane), and thus conserves the redox energy in a proton gradient. The polypeptide is NADH-quinone oxidoreductase subunit K (Edwardsiella ictaluri (strain 93-146)).